The primary structure comprises 572 residues: Galectin-3-binding protein B (572 aa).

The signal sequence occupies residues 1–14 (MLLLWPLLFLQVSA). In terms of domain architecture, SRCR spans 32–131 (VRLVGVIPSS…HKEDAGVICA (100 aa)). Cystine bridges form between Cys56/Cys120, Cys69/Cys130, and Cys100/Cys110. 3 N-linked (GlcNAc...) asparagine glycosylation sites follow: Asn135, Asn195, and Asn202. Residues 164-231 (CDFTIAVRDL…LYTRQIDVST (68 aa)) enclose the BTB domain. One can recognise a BACK domain in the interval 270–372 (QVSMYEYGVR…IPVDKLYDIQ (103 aa)). 2 N-linked (GlcNAc...) asparagine glycosylation sites follow: Asn430 and Asn548.

Its subcellular location is the secreted. It is found in the extracellular space. The protein localises to the extracellular matrix. Promotes integrin-mediated cell adhesion. The polypeptide is Galectin-3-binding protein B (lgals3bpb) (Danio rerio (Zebrafish)).